The chain runs to 185 residues: Shikimate kinase (185 aa).

12–17 (GSGKTT) contributes to the ATP binding site. A Mg(2+)-binding site is contributed by Thr16. The substrate site is built by Asp34, Arg58, and Gly79. Residue Arg116 participates in ATP binding. Residue Arg135 participates in substrate binding.

This sequence belongs to the shikimate kinase family. Monomer. The cofactor is Mg(2+).

It is found in the cytoplasm. It carries out the reaction shikimate + ATP = 3-phosphoshikimate + ADP + H(+). Its pathway is metabolic intermediate biosynthesis; chorismate biosynthesis; chorismate from D-erythrose 4-phosphate and phosphoenolpyruvate: step 5/7. Its function is as follows. Catalyzes the specific phosphorylation of the 3-hydroxyl group of shikimic acid using ATP as a cosubstrate. In Corynebacterium jeikeium (strain K411), this protein is Shikimate kinase.